Here is a 252-residue protein sequence, read N- to C-terminus: MLEYQVKIDSFEGPLDLLLHLINRLEIDIYDIPVAKITEQYLLYVHTMRELELDVASEYLVMAATLLSIKSRMLLPKQEEELFDEDLLEEEEDPREELIGKLIEYRKYKDAAQELKEREEERQNAFTKPPSDLSEFAKESEAKDTNLHVTVYDMLGAFQKVLNRKKITKPAPSRITRQEIPIEDKMNEIMNHLRKTKKRTNFMTLFQHDQKEHLVVTFLAVLELMKSHQIMLEQEGNFEDIYIIGSETIHDA.

A disordered region spans residues 117–136 (EREEERQNAFTKPPSDLSEF).

This sequence belongs to the ScpA family. As to quaternary structure, component of a cohesin-like complex composed of ScpA, ScpB and the Smc homodimer, in which ScpA and ScpB bind to the head domain of Smc. The presence of the three proteins is required for the association of the complex with DNA.

The protein localises to the cytoplasm. In terms of biological role, participates in chromosomal partition during cell division. May act via the formation of a condensin-like complex containing Smc and ScpB that pull DNA away from mid-cell into both cell halves. The protein is Segregation and condensation protein A of Bacillus pumilus (strain SAFR-032).